The chain runs to 274 residues: Probable cyclic nucleotide phosphodiesterase RPA0124 (274 aa).

Fe cation is bound by residues D8, H10, D49, N79, H155, H194, and H196. Residues H10, D49, and 79 to 80 (NH) contribute to the AMP site. Residue H196 coordinates AMP.

This sequence belongs to the cyclic nucleotide phosphodiesterase class-III family. Requires Fe(2+) as cofactor.

In Rhodopseudomonas palustris (strain ATCC BAA-98 / CGA009), this protein is Probable cyclic nucleotide phosphodiesterase RPA0124.